The following is an 80-amino-acid chain: MGFTKILVTFFLVGLLVISSSPQNAIASEIKAKINGLECFNTCTSYYDDHKCNVDCLSSGYPAGECYTVSPSQPKKCCCY.

The N-terminal stretch at 1–27 is a signal peptide; it reads MGFTKILVTFFLVGLLVISSSPQNAIA. Disulfide bonds link Cys39-Cys79, Cys43-Cys66, Cys52-Cys77, and Cys56-Cys78.

Belongs to the DEFL family.

It is found in the secreted. The polypeptide is Defensin-like protein 51 (LCR48) (Arabidopsis thaliana (Mouse-ear cress)).